The chain runs to 115 residues: Ribonuclease P protein component (115 aa).

It belongs to the RnpA family. In terms of assembly, consists of a catalytic RNA component (M1 or rnpB) and a protein subunit.

It catalyses the reaction Endonucleolytic cleavage of RNA, removing 5'-extranucleotides from tRNA precursor.. In terms of biological role, RNaseP catalyzes the removal of the 5'-leader sequence from pre-tRNA to produce the mature 5'-terminus. It can also cleave other RNA substrates such as 4.5S RNA. The protein component plays an auxiliary but essential role in vivo by binding to the 5'-leader sequence and broadening the substrate specificity of the ribozyme. In Bacillus cereus (strain 03BB102), this protein is Ribonuclease P protein component.